The chain runs to 189 residues: Peptidyl-tRNA hydrolase (189 aa).

Tyr-15 serves as a coordination point for tRNA. His-20 (proton acceptor) is an active-site residue. Positions 66, 68, and 114 each coordinate tRNA.

This sequence belongs to the PTH family. In terms of assembly, monomer.

The protein resides in the cytoplasm. The catalysed reaction is an N-acyl-L-alpha-aminoacyl-tRNA + H2O = an N-acyl-L-amino acid + a tRNA + H(+). Its function is as follows. Hydrolyzes ribosome-free peptidyl-tRNAs (with 1 or more amino acids incorporated), which drop off the ribosome during protein synthesis, or as a result of ribosome stalling. Catalyzes the release of premature peptidyl moieties from peptidyl-tRNA molecules trapped in stalled 50S ribosomal subunits, and thus maintains levels of free tRNAs and 50S ribosomes. The sequence is that of Peptidyl-tRNA hydrolase from Streptococcus pneumoniae (strain JJA).